We begin with the raw amino-acid sequence, 225 residues long: U2 small nuclear ribonucleoprotein B'' (225 aa).

Positions 7 to 86 constitute an RRM 1 domain; sequence HTIYINNMND…KPMRIQYAKT (80 aa). Positions 100–144 are disordered; the sequence is DKEKKKEKKKAKTMEQAAAAANKKPGQGTPNAANTQGTAAPNPQV. Residue lysine 111 is modified to N6-acetyllysine; alternate. Lysine 111 is covalently cross-linked (Glycyl lysine isopeptide (Lys-Gly) (interchain with G-Cter in SUMO2); alternate). Residues 113-123 show a composition bias toward low complexity; it reads MEQAAAAANKK. Positions 127–140 are enriched in polar residues; that stretch reads GTPNAANTQGTAAP. Phosphotyrosine is present on tyrosine 151. An RRM 2 domain is found at 151–225; that stretch reads YILFLNNLPE…HAMKITYAKK (75 aa).

It belongs to the RRM U1 A/B'' family. In terms of assembly, identified in the spliceosome B complex. Identified in the spliceosome C complex. Present in a spliceosome complex assembled in vitro, and composed of SNRPB2, HPRP8BP and CRNKL1. Contributes to the binding of stem loop IV of U2 snRNA with SNRPP1.

Its subcellular location is the nucleus. In terms of biological role, involved in pre-mRNA splicing as component of the spliceosome. Associated with sn-RNP U2, where it contributes to the binding of stem loop IV of U2 snRNA. The sequence is that of U2 small nuclear ribonucleoprotein B'' (Snrpb2) from Mus musculus (Mouse).